The following is a 320-amino-acid chain: Tyrosine recombinase Synpcc7942_B2651 (320 aa).

The region spanning 16–106 (VQDWDVLQML…ALKSLVRFSR (91 aa)) is the Core-binding (CB) domain. The 187-residue stretch at 127–313 (RDTTGTTPER…RQDFQGECTE (187 aa)) folds into the Tyr recombinase domain. Residues arginine 167, lysine 193, histidine 264, arginine 267, and histidine 291 contribute to the active site. Tyrosine 300 serves as the catalytic O-(3'-phospho-DNA)-tyrosine intermediate.

Belongs to the 'phage' integrase family.

Its subcellular location is the cytoplasm. In terms of biological role, site-specific tyrosine recombinase, which acts by catalyzing the cutting and rejoining of the recombining DNA molecules. This is Tyrosine recombinase Synpcc7942_B2651 from Synechococcus elongatus (strain ATCC 33912 / PCC 7942 / FACHB-805) (Anacystis nidulans R2).